The primary structure comprises 193 residues: MTEKHKTMGKFKVIVLAGTAGTGKSTIAGELIHEFKDIYPDLKFIEGDDLHPPANVEKMTRGIPLNDDDRWDWLKKVAVESTKAAASTKEHLSIVACSSLKKKYRDLIRHTCPESEFHFIFLYASKIEVLKRLKTRKGHFMKADMMESQFRDLELPDINDETDCDIVPLDFKTFYQIEKDVIQVVKSKVLNIE.

ATP is bound at residue 18-25; that stretch reads GTAGTGKS.

It belongs to the gluconokinase GntK/GntV family.

The protein resides in the cytoplasm. The catalysed reaction is D-gluconate + ATP = 6-phospho-D-gluconate + ADP + H(+). Its pathway is carbohydrate acid metabolism; D-gluconate degradation. The polypeptide is Probable gluconokinase (Saccharomyces cerevisiae (strain ATCC 204508 / S288c) (Baker's yeast)).